We begin with the raw amino-acid sequence, 623 residues long: Serine/threonine-protein kinase MAK (623 aa).

Residues 4–284 (YTTMRQLGDG…ASQALKHPYF (281 aa)) form the Protein kinase domain. ATP contacts are provided by residues 10–18 (LGDGTYGSV) and lysine 33. Catalysis depends on aspartate 125, which acts as the Proton acceptor. Phosphothreonine; by autocatalysis is present on threonine 157. Residue tyrosine 159 is modified to Phosphotyrosine; by autocatalysis. 2 disordered regions span residues 328 to 396 (IDQV…RRRW) and 416 to 469 (GASH…SDSE). Residues 356 to 369 (QQPPKQQSQEKPPQ) are compositionally biased toward low complexity. Over residues 446-455 (SGSNHSTGEN) the composition is skewed to polar residues.

This sequence belongs to the protein kinase superfamily. CMGC Ser/Thr protein kinase family. CDC2/CDKX subfamily. In terms of assembly, interacts with RP1. Interacts with AR and CDK20. Found in a complex containing MAK, AR and NCOA3. Interacts with FZR1 (via WD repeats). Mg(2+) is required as a cofactor. In terms of processing, autophosphorylated. Phosphorylated on serine and threonine residues. Expressed in prostate cancer cell lines at generally higher levels than in normal prostate epithelial cell lines. Isoform 1 is expressed in kidney, testis, lung, trachea, and retina. Isoform 2 is retina-specific where it is expressed in rod and cone photoreceptors.

The protein resides in the nucleus. It localises to the cytoplasm. It is found in the cytoskeleton. The protein localises to the microtubule organizing center. Its subcellular location is the centrosome. The protein resides in the spindle. It localises to the midbody. It is found in the cell projection. The protein localises to the cilium. Its subcellular location is the photoreceptor outer segment. The protein resides in the photoreceptor inner segment. It catalyses the reaction L-seryl-[protein] + ATP = O-phospho-L-seryl-[protein] + ADP + H(+). The catalysed reaction is L-threonyl-[protein] + ATP = O-phospho-L-threonyl-[protein] + ADP + H(+). Essential for the regulation of ciliary length and required for the long-term survival of photoreceptors. Phosphorylates FZR1 in a cell cycle-dependent manner. Plays a role in the transcriptional coactivation of AR. Could play an important function in spermatogenesis. May play a role in chromosomal stability in prostate cancer cells. The polypeptide is Serine/threonine-protein kinase MAK (MAK) (Homo sapiens (Human)).